Consider the following 324-residue polypeptide: Carbamate kinase (324 aa).

This sequence belongs to the carbamate kinase family.

It is found in the cytoplasm. It catalyses the reaction hydrogencarbonate + NH4(+) + ATP = carbamoyl phosphate + ADP + H2O + H(+). It functions in the pathway amino-acid degradation; L-arginine degradation via ADI pathway. This Rhizobium meliloti (strain 1021) (Ensifer meliloti) protein is Carbamate kinase.